We begin with the raw amino-acid sequence, 417 residues long: uncharacterized protein (417 aa).

The chain crosses the membrane as a helical span at residues 10–30 (ALVCFSILSILVLACGCVNTP). The segment at 84-106 (QENHPLQSNQNYEQTNGNFNEEN) is disordered. The segment covering 86–106 (NHPLQSNQNYEQTNGNFNEEN) has biased composition (polar residues). Residues 148–168 (LYYIKVIDPIVGGLAGIDIYV) traverse the membrane as a helical segment.

The protein resides in the cell membrane. This is an uncharacterized protein from Methanocaldococcus jannaschii (strain ATCC 43067 / DSM 2661 / JAL-1 / JCM 10045 / NBRC 100440) (Methanococcus jannaschii).